Reading from the N-terminus, the 713-residue chain is Leucine-rich repeat neuronal protein 2 (713 aa).

The N-terminal stretch at 1 to 18 is a signal peptide; it reads MRLLVAPLLLAWVAGATA. The Extracellular portion of the chain corresponds to 19–630; sequence AVPVVPWHVP…CHRALGDRPG (612 aa). Residues 20–69 form the LRRNT domain; it reads VPVVPWHVPCPPQCACQIRPWYTPRSSYREATTVDCNDLFLTAVPPALPA. LRR repeat units lie at residues 70–91, 94–115, 118–139, 142–163, 166–187, 190–211, 214–235, 238–259, 262–283, 286–305, 311–333, and 336–357; these read GTQTLLLQSNSIVRVDQSELGY, NLTELDLSQNSFSDARDCDFHA, QLLSLHLEENQLTRLEDHSFAG, SLQELYLNHNQLYRIAPRAFSG, NLLRLHLNSNLLRAIDSRWFEM, NLEILMIGGNKVDAILDMNFRP, NLRSLVLAGMNLREISDYALEG, SLESLSFYDNQLARVPRRALEQ, GLKFLDLNKNPLQRVGPGDFAN, HLKELGLNNMEELVSIDKFA, ELTKLDITNNPRLSFIHPRAFHH, and QMETLMLNNNALSALHQQTVES. N94 carries N-linked (GlcNAc...) asparagine glycosylation. In terms of domain architecture, LRRCT spans 369-422; sequence NPIRCDCVIRWANATGTRVRFIEPQSTLCAEPPDLQRLPVREVPFREMTDHCLP. An N-linked (GlcNAc...) asparagine glycan is attached at N381. In terms of domain architecture, Ig-like C2-type spans 422–511; sequence PLISPRSFPP…LVGADTKTVS (90 aa). The cysteines at positions 445 and 497 are disulfide-linked. N-linked (GlcNAc...) asparagine glycosylation is found at N555 and N583. The chain crosses the membrane as a helical span at residues 631–651; it reads LIAILALAVLLLAAGLAAHLG. Over 652–713 the chain is Cytoplasmic; the sequence is TGQPRKGVGG…TLLPPLSQNS (62 aa).

Overamplified in malignant gliomas.

The protein resides in the membrane. The sequence is that of Leucine-rich repeat neuronal protein 2 (LRRN2) from Homo sapiens (Human).